The chain runs to 277 residues: MTPLDTSAAAIFAANRAQGAVKFDVRLQDGMTRRGRVQESGSLRVRFPSPEAEGLSAVFINTAGGIAGGDRFDTDIAAGEGTRLTLTTAAAEKLYRAAGAPAQIRIALAAAANAHLAWLPQETILFDQARVARSIDIDLAETASLLLCEIVVFGRAAMGERMLSGEFVDRWRLRRGGRLVFAETVRLDGDIGATLAHRAVANGAAAIGTALIVPGDEALVQRIRDSAPSFSGEVGISAWNGFAMARFCAQDAARLRTDMMAVLGCASGTALPRLWLS.

It belongs to the UreD family. As to quaternary structure, ureD, UreF and UreG form a complex that acts as a GTP-hydrolysis-dependent molecular chaperone, activating the urease apoprotein by helping to assemble the nickel containing metallocenter of UreC. The UreE protein probably delivers the nickel.

Its subcellular location is the cytoplasm. In terms of biological role, required for maturation of urease via the functional incorporation of the urease nickel metallocenter. In Rhodopseudomonas palustris (strain BisB18), this protein is Urease accessory protein UreD.